A 174-amino-acid chain; its full sequence is N5-carboxyaminoimidazole ribonucleotide mutase (174 aa).

Residues Ser16, Asp19, and Arg46 each coordinate substrate.

The protein belongs to the AIR carboxylase family. Class I subfamily.

The enzyme catalyses 5-carboxyamino-1-(5-phospho-D-ribosyl)imidazole + H(+) = 5-amino-1-(5-phospho-D-ribosyl)imidazole-4-carboxylate. Its pathway is purine metabolism; IMP biosynthesis via de novo pathway; 5-amino-1-(5-phospho-D-ribosyl)imidazole-4-carboxylate from 5-amino-1-(5-phospho-D-ribosyl)imidazole (N5-CAIR route): step 2/2. Its function is as follows. Catalyzes the conversion of N5-carboxyaminoimidazole ribonucleotide (N5-CAIR) to 4-carboxy-5-aminoimidazole ribonucleotide (CAIR). This is N5-carboxyaminoimidazole ribonucleotide mutase from Mycobacterium tuberculosis (strain CDC 1551 / Oshkosh).